The chain runs to 330 residues: Aspartate--ammonia ligase (330 aa).

It belongs to the class-II aminoacyl-tRNA synthetase family. AsnA subfamily. Homodimer.

It localises to the cytoplasm. It catalyses the reaction L-aspartate + NH4(+) + ATP = L-asparagine + AMP + diphosphate + H(+). The protein operates within amino-acid biosynthesis; L-asparagine biosynthesis; L-asparagine from L-aspartate (ammonia route): step 1/1. The polypeptide is Aspartate--ammonia ligase (Salmonella typhi).